We begin with the raw amino-acid sequence, 174 residues long: UPF0113 protein AF_0058 (174 aa).

The PUA domain occupies 87–161; it reads RNRVWVNERG…KVFVENLVDR (75 aa).

It belongs to the UPF0113 family.

The polypeptide is UPF0113 protein AF_0058 (Archaeoglobus fulgidus (strain ATCC 49558 / DSM 4304 / JCM 9628 / NBRC 100126 / VC-16)).